We begin with the raw amino-acid sequence, 202 residues long: B-cell CLL/lymphoma 7 protein family member B (202 aa).

The tract at residues aspartate 53–serine 202 is disordered. Residues glutamate 90–aspartate 99 are compositionally biased toward polar residues. The span at serine 107–proline 123 shows a compositional bias: low complexity. Serine 114, serine 118, serine 120, serine 122, serine 127, serine 148, and serine 152 each carry phosphoserine.

This sequence belongs to the BCL7 family.

Positive regulator of apoptosis. Plays a role in the Wnt signaling pathway, negatively regulating the expression of Wnt signaling components CTNNB1 and HMGA1. Involved in cell cycle progression, maintenance of the nuclear structure and stem cell differentiation. May play a role in lung tumor development or progression. The polypeptide is B-cell CLL/lymphoma 7 protein family member B (BCL7B) (Bos taurus (Bovine)).